Reading from the N-terminus, the 1785-residue chain is BCL-6 corepressor-like protein 1 (1785 aa).

3 disordered regions span residues 65–101, 113–137, and 343–368; these read VGSG…KMDY, VPLS…NSRA, and ASTP…GPPS. The span at 83 to 97 shows a compositional bias: basic and acidic residues; that stretch reads KLGHKSEDKPDDPQP. At Ser-496 the chain carries Phosphoserine. Polar residues-rich tracts occupy residues 527–539 and 586–600; these read PCTS…TTQP and GTEQ…TFSP. 2 disordered regions span residues 527–550 and 562–646; these read PCTS…PLAD and PTPQ…PMPV. A phosphoserine mark is found at Ser-599 and Ser-613. Residue Lys-747 forms a Glycyl lysine isopeptide (Lys-Gly) (interchain with G-Cter in SUMO2) linkage. 3 disordered regions span residues 753–781, 876–901, and 937–977; these read IIDQ…QPST, SSSE…EQDP, and VQPS…LKLA. Phosphoserine occurs at positions 1029 and 1033. A Glycyl lysine isopeptide (Lys-Gly) (interchain with G-Cter in SUMO2) cross-link involves residue Lys-1092. 2 disordered regions span residues 1107 to 1293 and 1312 to 1487; these read PDDV…QGRR and WDTN…PEAR. The residue at position 1162 (Ser-1162) is a Phosphoserine. A compositionally biased stretch (basic residues) spans 1176 to 1185; sequence VRGKHKHRKP. The segment covering 1195-1213 has biased composition (basic and acidic residues); it reads KRADSHEEGSLEKKAKSSF. Polar residues predominate over residues 1222–1234; it reads STRTRSQSGSICS. Positions 1271–1284 are enriched in basic and acidic residues; sequence TQRDTQYRSHHAQD. The span at 1314 to 1324 shows a compositional bias: acidic residues; the sequence is TNEEEEEEEEE. The Nuclear localization signal signature appears at 1328-1336; that stretch reads KRKKRRRQK. The span at 1328–1339 shows a compositional bias: basic residues; that stretch reads KRKKRRRQKSRK. Residues 1352-1363 are compositionally biased toward basic and acidic residues; sequence EQRRKGRADLKA. Polar residues predominate over residues 1440-1449; it reads WSQQKTRSPK. Residues 1461-1480 are compositionally biased toward low complexity; sequence TPSKSRSASSEEASESPTAR. Ser-1476 is modified (phosphoserine). ANK repeat units lie at residues 1529-1558, 1562-1591, and 1595-1623; these read AGYT…NVNC, DGTR…DPTL, and SGQT…QGRA. Positions 1668 to 1785 are PCGF Ub-like fold domain (PUFD); required for the interaction with the KDM2B-SKP1 heterodimeric complex; that stretch reads DDFMFELSDK…SEVEFQSCNS (118 aa).

The protein belongs to the BCOR family. Interacts with PCGF1, forming heterodimers. The PCGF1-BCORL1 heterodimeric complex interacts with the KDM2B-SKP1 heterodimeric complex to form a homotetrameric polycomb repression complex 1 (PRC1.1). Interacts with SKP1. Interacts with CTBP1, HDAC4, HDAC5 and HDAC7. Detected in testis and prostate. Detected at lower levels in peripheral blood leukocytes and spleen. Mainly expressed in the spermatogonia and primary spermatocytes.

Its subcellular location is the nucleus. Transcriptional corepressor. May specifically inhibit gene expression when recruited to promoter regions by sequence-specific DNA-binding proteins such as BCL6. This repression may be mediated at least in part by histone deacetylase activities which can associate with this corepressor. The sequence is that of BCL-6 corepressor-like protein 1 from Homo sapiens (Human).